A 600-amino-acid chain; its full sequence is Fructan 1-exohydrolase (600 aa).

The N-terminal stretch at 1 to 27 (MAQAWAFLLPVLFFGSYVTNLFLPTYA) is a signal peptide. D73 is an active-site residue. N-linked (GlcNAc...) asparagine glycosylation is found at N166, N234, and N246. Residues C444 and C490 are joined by a disulfide bond. The N-linked (GlcNAc...) asparagine glycan is linked to N565.

Belongs to the glycosyl hydrolase 32 family.

It carries out the reaction Hydrolysis of terminal, non-reducing (2-&gt;1)-linked beta-D-fructofuranose residues in fructans.. Inhibited by sucrose. Its function is as follows. Hydrolyzes inulin-type beta-(2,1)-fructans. May play a role as a beta-(2,1)-trimmer during graminan biosynthesis. The chain is Fructan 1-exohydrolase from Leymus chinensis (Chinese lyme grass).